The sequence spans 377 residues: Meiotic driver cw9 (377 aa).

Disordered stretches follow at residues 1–49 (MKNK…DLNN) and 64–100 (NKST…GTTD). Over residues 11-29 (SMDEMSAKNDNEIDLEKGP) the composition is skewed to basic and acidic residues. Transmembrane regions (helical) follow at residues 105-125 (FLIK…PAVC), 142-162 (WTLF…LTYF), 172-192 (VTII…AQCV), 218-238 (VVII…RSKF), 252-272 (CSIS…FWTL), 276-296 (FSGL…TKGL), and 306-326 (ATGY…LFFY).

It belongs to the WTF family. As to quaternary structure, homomer. Forms protein aggregates. The two isoforms can interact with each other and with themselves. High sequence similarity is required for their interaction.

It is found in the spore membrane. It localises to the vacuole membrane. The protein resides in the ascus epiplasm. The protein localises to the cytoplasm. Its subcellular location is the endoplasmic reticulum membrane. Promotes unequal transmission of alleles from the parental zygote to progeny spores by acting as poison/antidote system where the poison and antidote proteins are produced from the same locus; the poison component is trans-acting and targets all spores within an ascus whereas the antidote component is spore-specific, leading to poisoning of all progeny that do not inherit the allele. Functionally, localizes isoform 2 to the vacuole thereby facilitating its degradation. In terms of biological role, forms toxic aggregates that disrupt spore maturation. The polypeptide is Meiotic driver cw9 (Schizosaccharomyces pombe (Fission yeast)).